Consider the following 102-residue polypeptide: Small ribosomal subunit protein uS10 (102 aa).

It belongs to the universal ribosomal protein uS10 family. In terms of assembly, part of the 30S ribosomal subunit.

Its function is as follows. Involved in the binding of tRNA to the ribosomes. The polypeptide is Small ribosomal subunit protein uS10 (Parvibaculum lavamentivorans (strain DS-1 / DSM 13023 / NCIMB 13966)).